Here is a 529-residue protein sequence, read N- to C-terminus: DEP domain-containing protein 1B (529 aa).

Positions 24–108 constitute a DEP domain; the sequence is FRAKMPLRKH…DNRHLYRFPP (85 aa). Residue Ser160 is modified to Phosphoserine. A Rho-GAP domain is found at 201–393; the sequence is DSLEEVLDVK…FLMDNYQEIL (193 aa). A Phosphoserine modification is found at Ser436.

This chain is DEP domain-containing protein 1B (DEPDC1B), found in Homo sapiens (Human).